The primary structure comprises 540 residues: Phosphoenolpyruvate carboxykinase (ATP) (540 aa).

R65 is a binding site for substrate. At K87 the chain carries N6-acetyllysine. 2 residues coordinate substrate: Y207 and K213. ATP is bound by residues K213, H232, and G248 to T256. Residues K213 and H232 each coordinate Mn(2+). D269 is a binding site for Mn(2+). Residues E297, R333, R449–I450, and T455 each bind ATP. R333 lines the substrate pocket. K523 carries the post-translational modification N6-acetyllysine.

The protein belongs to the phosphoenolpyruvate carboxykinase (ATP) family. In terms of assembly, monomer. The cofactor is Mn(2+).

It is found in the cytoplasm. It carries out the reaction oxaloacetate + ATP = phosphoenolpyruvate + ADP + CO2. The protein operates within carbohydrate biosynthesis; gluconeogenesis. Its function is as follows. Involved in the gluconeogenesis. Catalyzes the conversion of oxaloacetate (OAA) to phosphoenolpyruvate (PEP) through direct phosphoryl transfer between the nucleoside triphosphate and OAA. In Shigella dysenteriae serotype 1 (strain Sd197), this protein is Phosphoenolpyruvate carboxykinase (ATP).